The following is a 163-amino-acid chain: Succinate dehydrogenase assembly factor 2, mitochondrial (163 aa).

This sequence belongs to the SDHAF2 family. In terms of assembly, interacts with the flavoprotein subunit within the SDH catalytic dimer.

Its subcellular location is the mitochondrion matrix. Functionally, plays an essential role in the assembly of succinate dehydrogenase (SDH), an enzyme complex (also referred to as respiratory complex II) that is a component of both the tricarboxylic acid (TCA) cycle and the mitochondrial electron transport chain, and which couples the oxidation of succinate to fumarate with the reduction of ubiquinone (coenzyme Q) to ubiquinol. Required for flavinylation (covalent attachment of FAD) of the flavoprotein subunit of the SDH catalytic dimer. The polypeptide is Succinate dehydrogenase assembly factor 2, mitochondrial (Kluyveromyces lactis (strain ATCC 8585 / CBS 2359 / DSM 70799 / NBRC 1267 / NRRL Y-1140 / WM37) (Yeast)).